Consider the following 243-residue polypeptide: tRNA pseudouridine synthase A (243 aa).

Asp-54 serves as the catalytic Nucleophile. Tyr-112 serves as a coordination point for substrate.

This sequence belongs to the tRNA pseudouridine synthase TruA family. Homodimer.

It catalyses the reaction uridine(38/39/40) in tRNA = pseudouridine(38/39/40) in tRNA. In terms of biological role, formation of pseudouridine at positions 38, 39 and 40 in the anticodon stem and loop of transfer RNAs. The protein is tRNA pseudouridine synthase A of Aster yellows witches'-broom phytoplasma (strain AYWB).